We begin with the raw amino-acid sequence, 360 residues long: Uroporphyrinogen decarboxylase (360 aa).

Substrate contacts are provided by residues Arg27–Arg31, Phe46, Asp77, Tyr154, Thr209, and His327.

It belongs to the uroporphyrinogen decarboxylase family. Homodimer.

It localises to the cytoplasm. The catalysed reaction is uroporphyrinogen III + 4 H(+) = coproporphyrinogen III + 4 CO2. It functions in the pathway porphyrin-containing compound metabolism; protoporphyrin-IX biosynthesis; coproporphyrinogen-III from 5-aminolevulinate: step 4/4. Functionally, catalyzes the decarboxylation of four acetate groups of uroporphyrinogen-III to yield coproporphyrinogen-III. This is Uroporphyrinogen decarboxylase from Wigglesworthia glossinidia brevipalpis.